The primary structure comprises 266 residues: Undecaprenyl-diphosphatase (266 aa).

A run of 8 helical transmembrane segments spans residues 1 to 21 (MTLLQAIILGIVQGLTEFLPV), 40 to 60 (LPLYVDIATNTGTFFAVLVVL), 90 to 110 (LLVVLGSIPTAMIGLGLKPIF), 113 to 133 (LNQPLYVSFALIVTGLVLWFT), 145 to 165 (LSWLDATIGGIAQGCAVIPGI), 188 to 208 (FSFLMYLVVSFGVAILGIDEV), 217 to 237 (PLLGMIIASFVTGYIALLWLF), and 245 to 265 (FKWFAPYLWVVAAITLIKVAM).

It belongs to the UppP family.

The protein resides in the cell inner membrane. The enzyme catalyses di-trans,octa-cis-undecaprenyl diphosphate + H2O = di-trans,octa-cis-undecaprenyl phosphate + phosphate + H(+). In terms of biological role, catalyzes the dephosphorylation of undecaprenyl diphosphate (UPP). Confers resistance to bacitracin. In Acaryochloris marina (strain MBIC 11017), this protein is Undecaprenyl-diphosphatase.